Consider the following 258-residue polypeptide: Tritrans,polycis-undecaprenyl-diphosphate synthase (geranylgeranyl-diphosphate specific) (258 aa).

Residue Asp37 is part of the active site. Asp37 provides a ligand contact to Mg(2+). Substrate-binding positions include 38 to 41 (GNRR), His54, and 82 to 84 (STE). The active-site Proton acceptor is Asn85. Residues Phe86, Arg88, Arg207, and 213-215 (RIS) each bind substrate. Residue Glu226 participates in Mg(2+) binding.

This sequence belongs to the UPP synthase family. Homodimer. It depends on Mg(2+) as a cofactor.

The catalysed reaction is geranylgeranyl diphosphate + 7 isopentenyl diphosphate = tri-trans,hepta-cis-undecaprenyl diphosphate + 7 diphosphate. Catalyzes the sequential condensation of isopentenyl diphosphate (IPP) with geranylgeranyl diphosphate (GGPP) to yield (2Z,6Z,10Z,14Z,18Z,22Z,26Z,30E,34E,38E)-undecaprenyl diphosphate (tritrans,heptacis-UPP). It is probably the precursor of glycosyl carrier lipids. This is Tritrans,polycis-undecaprenyl-diphosphate synthase (geranylgeranyl-diphosphate specific) from Thermoplasma volcanium (strain ATCC 51530 / DSM 4299 / JCM 9571 / NBRC 15438 / GSS1).